Consider the following 361-residue polypeptide: MPRDGTNEQRFLELPSPMSFILNILRNVLEYFGVPVDQDLLICQNKNCGSARSIVRIIGRRLPLKPCRRPHFELIPHVNSTESDDYELRVPSFADVLCVANDEEASCLRFRHSLWQKKEERKIAPFYPSKLTWDPSSPGLRQNKTETDDLPVNEAAIKKIAALEDELTFLRSQIAAIVAMQDLRESRETGFIDLSDEQVPPSSATTGLSVEPDHAPSVVLPPPPPPPPPPQFSLQPPSSLPMQPGSANTHDIDSLATEMERQLSGVKKTDDSHHSKSQRLRDVPNMLDVLKDVNKVRLRPVERSPGGRPVQKRKRRSSEWDPVSLISNALKQKFAFQDDSFDRENSSWECSPFSSPETSRF.

The residue at position 137 (Ser-137) is a Phosphoserine. Disordered stretches follow at residues 191-286 and 298-322; these read FIDL…VPNM and LRPV…EWDP. Residues 219 to 231 show a composition bias toward pro residues; that stretch reads VLPPPPPPPPPPQ. Residues 232-244 are compositionally biased toward low complexity; that stretch reads FSLQPPSSLPMQP. Basic and acidic residues predominate over residues 250–282; sequence HDIDSLATEMERQLSGVKKTDDSHHSKSQRLRD. Phosphoserine is present on residues Ser-304 and Ser-340.

This sequence belongs to the MTFR1 family. Expressed predominantly in testis (at protein level). Expressed to a lower extent in spleen.

It is found in the mitochondrion. May play a role in mitochondrial aerobic respiration essentially in the testis. Can also promote mitochondrial fission. The sequence is that of Mitochondrial fission regulator 2 (Mtfr2) from Mus musculus (Mouse).